Here is a 481-residue protein sequence, read N- to C-terminus: UDP-glycosyltransferase 88F3 (481 aa).

UDP-alpha-D-glucose contacts are provided by residues Ser288, 357–358 (WA), 375–383 (HCGWNSVLE), and 397–400 (YAEQ).

This sequence belongs to the UDP-glycosyltransferase family.

Its function is as follows. Glycosyltransferase that may possess chalcone and dihydrochalcone 2'-O-glucosyltransferase activity. In Pyrus communis (Pear), this protein is UDP-glycosyltransferase 88F3.